A 308-amino-acid polypeptide reads, in one-letter code: Aspartate carbamoyltransferase catalytic subunit (308 aa).

2 residues coordinate carbamoyl phosphate: R59 and T60. K87 is an L-aspartate binding site. R109, H137, and Q140 together coordinate carbamoyl phosphate. Residues R170 and R224 each contribute to the L-aspartate site. The carbamoyl phosphate site is built by G265 and P266.

This sequence belongs to the aspartate/ornithine carbamoyltransferase superfamily. ATCase family. As to quaternary structure, heterododecamer (2C3:3R2) of six catalytic PyrB chains organized as two trimers (C3), and six regulatory PyrI chains organized as three dimers (R2).

It catalyses the reaction carbamoyl phosphate + L-aspartate = N-carbamoyl-L-aspartate + phosphate + H(+). It participates in pyrimidine metabolism; UMP biosynthesis via de novo pathway; (S)-dihydroorotate from bicarbonate: step 2/3. In terms of biological role, catalyzes the condensation of carbamoyl phosphate and aspartate to form carbamoyl aspartate and inorganic phosphate, the committed step in the de novo pyrimidine nucleotide biosynthesis pathway. This chain is Aspartate carbamoyltransferase catalytic subunit, found in Flavobacterium psychrophilum (strain ATCC 49511 / DSM 21280 / CIP 103535 / JIP02/86).